We begin with the raw amino-acid sequence, 272 residues long: SKA complex subunit 1 homolog (272 aa).

A coiled-coil region spans residues 48–75 (ALSSMELQVQSIKDRLREETEAIPKAKK).

This sequence belongs to the SKA1 family.

The protein is SKA complex subunit 1 homolog of Arabidopsis thaliana (Mouse-ear cress).